The sequence spans 380 residues: MREESRSRKRKHIPVDIEEVEVRSKYFKKNERTVELVKENKINKDLQNYGGVNIDWIKALKPIEYFEWIESRTCDDPRTWGRPITKEEMINDSGAKVPESFLPIYNRVRLMRSKVKTPVDAMGCSMIPVLVSNKCGIPSEKVDPKNFRLQFLIGTMLSAQTRDERMAQAALNITEYCLNTLKIAEGITLDGLLKIDEPVLANLIRCVSFYTRKANFIKRTAQLLVDNFDSDIPYDIEGILSLPGVGPKMGYLTLQKGWGLIAGICVDVHVHRLCKMWNWVDPIKCKTAEHTRKELQVWLPHSLWYEINTVLVGFGQLICMARGKRCDLCLANDVCNARNEKLIESSKFHQLEDKEDIEKVYSHWLDTVTNGITTERHKKK.

The short motif at 8 to 12 (RKRKH) is the Nuclear localization signal element. Residues 15-40 (VDIEEVEVRSKYFKKNERTVELVKEN) form an interaction with MLH1 region. Residue K194 forms a Glycyl lysine isopeptide (Lys-Gly) (interchain with G-Cter in SUMO) linkage. The HhH domain maps to 228–252 (FDSDIPYDIEGILSLPGVGPKMGYL). K248 functions as the Nucleophile; for N-glycosylase activity in the catalytic mechanism. Residues C319, C326, C329, and C335 each contribute to the [4Fe-4S] cluster site. The Nuclear localization signal signature appears at 376–380 (RHKKK).

Belongs to the Nth/MutY family. As to quaternary structure, interacts with MLH1. [4Fe-4S] cluster serves as cofactor. Post-translationally, monosumoylated.

The protein resides in the nucleus. The enzyme catalyses 2'-deoxyribonucleotide-(2'-deoxyribose 5'-phosphate)-2'-deoxyribonucleotide-DNA = a 3'-end 2'-deoxyribonucleotide-(2,3-dehydro-2,3-deoxyribose 5'-phosphate)-DNA + a 5'-end 5'-phospho-2'-deoxyribonucleoside-DNA + H(+). Functionally, bifunctional DNA N-glycosylase with associated apurinic/apyrimidinic (AP) lyase function that catalyzes the first step in base excision repair (BER), the primary repair pathway for the repair of oxidative DNA damage. The DNA N-glycosylase activity releases the damaged DNA base from DNA by cleaving the N-glycosidic bond, leaving an AP site. The AP-lyase activity cleaves the phosphodiester bond 3' to the AP site by a beta-elimination. Primarily recognizes and repairs oxidative base damage of pyrimidines, but also purine-derived lesions, alkylation damage as well as abasic sites. Can also repair the oxidation products of 8-oxoguanine. This Saccharomyces cerevisiae (strain ATCC 204508 / S288c) (Baker's yeast) protein is Endonuclease III homolog 2 (NTG2).